A 5654-amino-acid chain; its full sequence is Mucin-5AC (5654 aa).

The signal sequence occupies residues 1–27; sequence MSVGRRKLALLWALALALACTRHTGHA. The segment at 27–49 is disordered; it reads AQDGSSESSYKHHPALSPIARGP. One can recognise a VWFD 1 domain in the interval 79 to 249; it reads RVCSTWGSFH…KMDDPTDQCQ (171 aa). Cystine bridges form between C81–C211 and C103–C248. E198 is a binding site for Cu(2+). N205 and N258 each carry an N-linked (GlcNAc...) asparagine glycan. Cu(2+)-binding residues include H320 and H367. Positions 338–394 constitute a TIL 1 domain; sequence CPNNMQYHECRSPCADTCSNQEHSRACEDHCVAGCFCPEGTVLDDIGQTGCVPVSKC. The VWFC 1 domain occupies 394–465; sequence CACVYNGAAY…CSYVLTKPCD (72 aa). N415 is a glycosylation site (N-linked (GlcNAc...) asparagine). Residues 432–607 enclose the VWFD 2 domain; sequence GTCSVLGGAH…NTFKTQAACP (176 aa). Intrachain disulfides connect C434–C571, C456–C606, and C478–C486. A glycan (N-linked (GlcNAc...) asparagine) is linked at N524. TIL domains follow at residues 704-761 and 818-863; these read CPKS…ASNC and DTGA…AEDC. A VWFD 3 domain is found at 901-1072; that stretch reads ATCAVYGDGH…NSWKLSPSCP (172 aa). 4 disulfides stabilise this stretch: C903–C1036, C925–C1071, C934–C1033, and C953–C960. N1308 carries an N-linked (GlcNAc...) asparagine glycan. The interval 1336–1377 is disordered; sequence LVVSSTHTPSNGPSSAHTGPPSSAWPTTAGTSPRTRLPTASA. Residues 1338–1377 show a composition bias toward polar residues; sequence VSSTHTPSNGPSSAHTGPPSSAWPTTAGTSPRTRLPTASA. The stretch at 1383 to 1481 is one Cys-rich subdomain 1 repeat; sequence CGEKCLWSPW…RVQCCTPLPC (99 aa). The interval 1383 to 4731 is 9 X Cys-rich subdomain repeats; the sequence is CGEKCLWSPW…VLCCETPRGC (3349 aa). C-linked (Man) tryptophan glycosylation is present at W1389. Low complexity-rich tracts occupy residues 1483 to 1539 and 1547 to 1575; these read TSSS…TFST and ATST…PSTS. The segment at 1483-1575 is disordered; the sequence is TSSSPAQTTP…KPTPTEPSTS (93 aa). One copy of the Cys-rich subdomain 2 repeat lies at 1577-1677; it reads CLQELCTWTE…IQCCETVNVC (101 aa). A glycan (C-linked (Man) tryptophan) is linked at W1584. The interval 1688–1733 is disordered; that stretch reads ATTRPTPHPTGAQTQTTFTTHMPSASTEQPTATSRGGPTATSVTQG. Over residues 1697–1707 the composition is skewed to low complexity; sequence TGAQTQTTFTT. Residues 1708-1733 show a composition bias toward polar residues; sequence HMPSASTEQPTATSRGGPTATSVTQG. The stretch at 1743–1847 is one Cys-rich subdomain 3 repeat; the sequence is CHPRCTWTKW…VLCCETPRGC (105 aa). W1749 is a glycosylation site (C-linked (Man) tryptophan). Positions 1849 to 1948 are disordered; it reads MTSTPGSTSS…KPTPTEPSTS (100 aa). Low complexity-rich tracts occupy residues 1850–1912 and 1920–1948; these read TSTP…TFST and ATST…PSTS. A Cys-rich subdomain 4 repeat occupies 1950 to 2050; sequence CLQELCTWTE…IQCCETVNVC (101 aa). W1957 is a glycosylation site (C-linked (Man) tryptophan). Residues 2059-2110 form a disordered region; sequence TVATTRPTPHPTGAQTQTTFTTHMPSASTEQPTATSRGGPTATSVTQGTHTT. The segment covering 2070-2080 has biased composition (low complexity); that stretch reads TGAQTQTTFTT. Residues 2081 to 2110 show a composition bias toward polar residues; that stretch reads HMPSASTEQPTATSRGGPTATSVTQGTHTT. A Cys-rich subdomain 5 repeat occupies 2116–2220; sequence CHPRCTWTTW…VLCCETPKGC (105 aa). W2122 is a glycosylation site (C-linked (Man) tryptophan). The segment covering 2224 to 2234 has biased composition (low complexity); sequence STPVTAPSTPS. Positions 2224-3214 are disordered; the sequence is STPVTAPSTP…SHVSISKTTH (991 aa). Polar residues predominate over residues 2235-2249; it reads GRATSPTQSTSSWQK. Low complexity-rich tracts occupy residues 2250 to 3184 and 3192 to 3214; these read SRTT…TPGP and PTTS…KTTH. Residues 2257–3200 form a 107 X 8 AA approximate tandem repeats of T-T-S-T-T-S-A-P region; sequence TTSTTSTPQT…VPTTSTASVS (944 aa). 16 O-linked (GalNAc) threonine glycosylation sites follow: T2395, T2405, T2451, T2461, T2531, T2541, T2571, T2581, T2699, T2709, T2883, T2893, T2979, T2989, T3067, and T3077. Residues 3222–3326 form a Cys-rich subdomain 6 repeat; the sequence is CHLRCTWTKW…VLCCETPKGC (105 aa). W3228 is a glycosylation site (C-linked (Man) tryptophan). Residues 3329-3340 are compositionally biased toward low complexity; that stretch reads TSTPVTAPSTPS. Residues 3329–3515 are disordered; it reads TSTPVTAPST…SVSKTTHSQP (187 aa). Over residues 3341 to 3355 the composition is skewed to polar residues; it reads GRATSPTQSTSSWQK. A compositionally biased stretch (low complexity) spans 3356–3513; sequence SRTTTLVTTS…HVSVSKTTHS (158 aa). Positions 3363–3498 are 17 X 8 AA approximate tandem repeats of T-T-S-T-T-S-A-P; the sequence is TTSTTSTPQT…VTTTSTASVS (136 aa). Residues 3520–3660 form a Cys-rich subdomain 7 repeat; sequence CHPRCTWTKW…WQKSRTTTLV (141 aa). A C-linked (Man) tryptophan glycan is attached at W3526. The span at 3628 to 3638 shows a compositional bias: low complexity; that stretch reads STSVTAPSTPS. The interval 3628–3951 is disordered; sequence STSVTAPSTP…KTTHSQPVTR (324 aa). The span at 3639-3660 shows a compositional bias: polar residues; it reads GRATSPTQSTSSWQKSRTTTLV. Residues 3661-3931 are 34 X 8 AA approximate tandem repeats of T-T-S-T-T-S-A-P; sequence TSSITSTTQT…VPTTSTASVS (271 aa). Positions 3661–3946 are enriched in low complexity; the sequence is TSSITSTTQT…HVSVSKTTHS (286 aa). A glycan (N-linked (GlcNAc...) asparagine) is linked at N3774. The stretch at 3953-4057 is one Cys-rich subdomain 8 repeat; sequence CHPRCTWTKW…VLCCETPKGC (105 aa). W3959 is a glycosylation site (C-linked (Man) tryptophan). The segment covering 4060-4071 has biased composition (low complexity); sequence TSTPVTAPSTPS. Residues 4060–4625 are disordered; the sequence is TSTPVTAPST…KTTHSQPVTS (566 aa). A compositionally biased stretch (polar residues) spans 4072-4088; that stretch reads GRATSPTQSTSSWQKSR. Residues 4089 to 4610 show a composition bias toward low complexity; it reads TTTLVTTSTT…TTPVSKTSTS (522 aa). Residues 4093-4595 form a 58 X 8 AA approximate tandem repeats of T-T-S-T-T-S-A-P region; it reads VTTSTTSTPQ…TSGPGTTPSP (503 aa). 16 O-linked (GalNAc) threonine glycosylation sites follow: T4224, T4234, T4296, T4306, T4320, T4330, T4376, T4386, T4440, T4450, T4480, T4490, T4512, T4522, T4568, and T4578. The span at 4611–4624 shows a compositional bias: polar residues; that stretch reads HLSVSKTTHSQPVT. The stretch at 4627 to 4731 is one Cys-rich subdomain 9 repeat; that stretch reads CHPLCAWTKW…VLCCETPRGC (105 aa). Residue W4633 is glycosylated (C-linked (Man) tryptophan). Positions 4830-4849 are disordered; sequence TLPPAPATSPSISTSEPVTE. The VWFC 2 domain maps to 4852–4918; sequence CPNAVPPRKK…DGCCHHYQCQ (67 aa). N-linked (GlcNAc...) asparagine glycosylation is found at N4869 and N4942. One can recognise a VWFD 4 domain in the interval 4919–5103; it reads CVCSGWGDPH…VSIPDQPACH (185 aa). 3 disulfides stabilise this stretch: C4921-C5063, C4943-C5102, and C4967-C4975. N-linked (GlcNAc...) asparagine glycans are attached at residues N5057, N5093, and N5236. The VWFC 3 domain occupies 5276 to 5345; the sequence is PRCLGPHGEP…GQCCPQYSCA (70 aa). N5347, N5377, N5386, N5455, and N5528 each carry an N-linked (GlcNAc...) asparagine glycan. The region spanning 5381 to 5448 is the VWFC 4 domain; sequence TVCSINGTLY…QSGQCCGTCV (68 aa). 4 disulfides stabilise this stretch: C5532–C5582, C5546–C5596, C5557–C5612, and C5561–C5614. In terms of domain architecture, CTCK spans 5532-5620; sequence CAVYHRSLII…ECGCMGRRCP (89 aa). N-linked (GlcNAc...) asparagine glycosylation is present at N5591. Residues 5622–5654 form a disordered region; that stretch reads PGDTQHSEEAEPEPSQEAESGSWERGVPVSPMH.

As to quaternary structure, homomultimer; disulfide-linked. The N- and C-terminus mediate their assembly into higher order structures to form filaments. The CTCK domains of two polypeptides associate in the endoplasmic reticulum to generate intermolecularly disulfide-bonded dimers. These dimers progress to the Golgi apparatus, which is a more acidic environment than the endoplasmic reticulum. Under acidic conditions, the N-termini form non-covalent intermolecular interactions that juxtapose assemblies from different CTCK-linked dimers to produce long, disulfide-linked polymers that remain highly compact until secretion. Post-translationally, C-, O- and N-glycosylated. O-glycosylated on the second and last Thr of the Thr-/Ser-rich tandem repeats TTPSPVPTTSTTSA. One form of glycosylation is also known as Lewis B (LeB) blood group antigen, a tetrasaccharide consisting of N-acetylglucosamine having a fucosyl residue attached. It has a role as an epitope and antigen and functions as a receptor for H.pylori binding and facilitates infection. C-mannosylation in the Cys-rich subdomains may be required for proper folding of these regions and for export from the endoplasmic reticulum during biosynthesis. In terms of processing, proteolytic cleavage in the C-terminal is initiated early in the secretory pathway and does not involve a serine protease. The extent of cleavage is increased in the acidic parts of the secretory pathway. Cleavage generates a reactive group which could link the protein to a primary amide. Highly expressed in surface mucosal cells of respiratory tract and stomach epithelia. Overexpressed in a number of carcinomas. Also expressed in Barrett's esophagus epithelium and in the proximal duodenum.

The protein localises to the secreted. Functionally, gel-forming glycoprotein of gastric and respiratory tract epithelia that protects the mucosa from infection and chemical damage by binding to inhaled microorganisms and particles that are subsequently removed by the mucociliary system. Interacts with H.pylori in the gastric epithelium, Barrett's esophagus as well as in gastric metaplasia of the duodenum (GMD). The polypeptide is Mucin-5AC (Homo sapiens (Human)).